A 262-amino-acid polypeptide reads, in one-letter code: Tryptophan synthase alpha chain (262 aa).

Catalysis depends on proton acceptor residues Glu48 and Asp59.

It belongs to the TrpA family. As to quaternary structure, tetramer of two alpha and two beta chains.

The catalysed reaction is (1S,2R)-1-C-(indol-3-yl)glycerol 3-phosphate + L-serine = D-glyceraldehyde 3-phosphate + L-tryptophan + H2O. It functions in the pathway amino-acid biosynthesis; L-tryptophan biosynthesis; L-tryptophan from chorismate: step 5/5. The alpha subunit is responsible for the aldol cleavage of indoleglycerol phosphate to indole and glyceraldehyde 3-phosphate. The polypeptide is Tryptophan synthase alpha chain (Helicobacter pylori (strain HPAG1)).